Reading from the N-terminus, the 184-residue chain is ATP synthase subunit b, chloroplastic (184 aa).

Residues 29 to 49 traverse the membrane as a helical segment; the sequence is TNLINLGVVLGLLVYFGKGVL.

This sequence belongs to the ATPase B chain family. As to quaternary structure, F-type ATPases have 2 components, F(1) - the catalytic core - and F(0) - the membrane proton channel. F(1) has five subunits: alpha(3), beta(3), gamma(1), delta(1), epsilon(1). F(0) has four main subunits: a(1), b(1), b'(1) and c(10-14). The alpha and beta chains form an alternating ring which encloses part of the gamma chain. F(1) is attached to F(0) by a central stalk formed by the gamma and epsilon chains, while a peripheral stalk is formed by the delta, b and b' chains.

It localises to the plastid. It is found in the chloroplast thylakoid membrane. In terms of biological role, f(1)F(0) ATP synthase produces ATP from ADP in the presence of a proton or sodium gradient. F-type ATPases consist of two structural domains, F(1) containing the extramembraneous catalytic core and F(0) containing the membrane proton channel, linked together by a central stalk and a peripheral stalk. During catalysis, ATP synthesis in the catalytic domain of F(1) is coupled via a rotary mechanism of the central stalk subunits to proton translocation. Its function is as follows. Component of the F(0) channel, it forms part of the peripheral stalk, linking F(1) to F(0). This Anthoceros angustus (Hornwort) protein is ATP synthase subunit b, chloroplastic.